Consider the following 690-residue polypeptide: Crooked neck-like protein 1 (690 aa).

HAT repeat units follow at residues 61–93 (DYKLRKRKTFEDNIRKNRTVISNWIKYAQWEES), 95–127 (KEIQRARSIYERALDVDYRNITLWLKYAEMEMK), 129–161 (RQVNHARNIWDRAITTLPRVNQFWYKYTYMEEM), 163–194 (GNVAGARQVFERWMEWQPEEQAWHSYINFELR), 196–227 (KEVERARTIYERFVLVHPAVKNWIKYARFEEK), 229–264 (AYFAHARKVYERAVEFFGDEHMDEHLYVAFAKFEEN), 266–300 (KEFERVRVIYKYALDRISKQEAQELFKNYTIFEKK), 310–342 (IIVSKRRFQYEEEVKANPHNYDAWFDYLRLVES), 344–378 (AEADTVREVYERAIANVPPIQEKRHWKRYIYLWVN), 388–424 (KDPERTRQVYQASLELIPHKKFTFAKMWLYYAQFEIR), 459–491 (REFDRCRKLYEKFLEFGPENCTSWIKFAELETI), 493–527 (GDIERARAIYELAISQPRLDMPEVLWKSYIDFEIE), 529–560 (EETERTRNLYRQLLQRTQHVKVWISFAQFELS), 565–606 (GSVA…EFGT), 608–646 (SDKERVDKLMPEKVKKRRKVQADDGSDAGWEEYYDYIFP), and 648–673 (DAANQPNLKLLAMAKLWKKQQQEREA). The segment at 250-467 (MDEHLYVAFA…LREFDRCRKL (218 aa)) is mediates interaction with HSP90. S342 bears the Phosphoserine mark. A Nuclear localization signal motif is present at residues 618 to 626 (PEKVKKRRK). Residues 667–679 (QQQEREAAEQDPD) are compositionally biased toward basic and acidic residues. The segment at 667-690 (QQQEREAAEQDPDKDIDESESSSF) is disordered. The span at 680–690 (KDIDESESSSF) shows a compositional bias: acidic residues. S689 bears the Phosphoserine mark.

The protein belongs to the crooked-neck family. In terms of assembly, identified in the spliceosome C complex. Present in a spliceosome complex assembled in vitro containing CRNKL1, HPRP8BP and SNRPB2. Component of the minor spliceosome, which splices U12-type introns. Interacts with PPIL2 (via the PPIase cyclophilin-type domain); they may form a trimeric complex with HSP90.

Its subcellular location is the nucleus. The protein localises to the nucleus speckle. In terms of biological role, involved in pre-mRNA splicing process. As a component of the minor spliceosome, involved in the splicing of U12-type introns in pre-mRNAs. The polypeptide is Crooked neck-like protein 1 (Crnkl1) (Mus musculus (Mouse)).